A 740-amino-acid polypeptide reads, in one-letter code: UvrABC system protein B (740 aa).

The tract at residues 1–36 (MTIAIRTTLDEPENHSDFVPHRPSRPEKTEPSKPFR) is disordered. Residues 8-33 (TLDEPENHSDFVPHRPSRPEKTEPSK) are compositionally biased toward basic and acidic residues. The Helicase ATP-binding domain occupies 56 to 444 (KDIQKGERDQ…GGVFVEQIIR (389 aa)). ATP is bound at residue 69 to 76 (GVTGSGKT). The short motif at 122-145 (YYDYYQPEAYVPRTDTYIEKDSAI) is the Beta-hairpin element. One can recognise a Helicase C-terminal domain in the interval 461–627 (QVDNLIFEAK…TVKRQVDDIV (167 aa)). Residues 651 to 686 (ARSISETEKEMLEAAANLEFEKAAQLRDVLHQLKRQ) enclose the UVR domain. The disordered stretch occupies residues 687–740 (ELGLPPEKSSEIQGRSEAGRPGTRKTRSDKAREAKASKRVKQEAGEKLLRSRGH). A compositionally biased stretch (basic and acidic residues) spans 712–740 (TRSDKAREAKASKRVKQEAGEKLLRSRGH).

Belongs to the UvrB family. In terms of assembly, forms a heterotetramer with UvrA during the search for lesions. Interacts with UvrC in an incision complex.

It localises to the cytoplasm. Functionally, the UvrABC repair system catalyzes the recognition and processing of DNA lesions. A damage recognition complex composed of 2 UvrA and 2 UvrB subunits scans DNA for abnormalities. Upon binding of the UvrA(2)B(2) complex to a putative damaged site, the DNA wraps around one UvrB monomer. DNA wrap is dependent on ATP binding by UvrB and probably causes local melting of the DNA helix, facilitating insertion of UvrB beta-hairpin between the DNA strands. Then UvrB probes one DNA strand for the presence of a lesion. If a lesion is found the UvrA subunits dissociate and the UvrB-DNA preincision complex is formed. This complex is subsequently bound by UvrC and the second UvrB is released. If no lesion is found, the DNA wraps around the other UvrB subunit that will check the other stand for damage. The polypeptide is UvrABC system protein B (Zymomonas mobilis subsp. mobilis (strain ATCC 31821 / ZM4 / CP4)).